A 210-amino-acid chain; its full sequence is tRNA (guanine-N(7)-)-methyltransferase (210 aa).

S-adenosyl-L-methionine contacts are provided by glutamate 36, glutamate 61, aspartate 90, and aspartate 112. Residue aspartate 112 is part of the active site. Substrate-binding positions include lysine 116, aspartate 148, and 188 to 191 (TEYE).

The protein belongs to the class I-like SAM-binding methyltransferase superfamily. TrmB family.

It carries out the reaction guanosine(46) in tRNA + S-adenosyl-L-methionine = N(7)-methylguanosine(46) in tRNA + S-adenosyl-L-homocysteine. The protein operates within tRNA modification; N(7)-methylguanine-tRNA biosynthesis. Catalyzes the formation of N(7)-methylguanine at position 46 (m7G46) in tRNA. This is tRNA (guanine-N(7)-)-methyltransferase from Mycoplasma genitalium (strain ATCC 33530 / DSM 19775 / NCTC 10195 / G37) (Mycoplasmoides genitalium).